The sequence spans 393 residues: Ribonuclease D (393 aa).

Positions 14–181 (LITTTEDLTG…VYQLLLERLE (168 aa)) constitute a 3'-5' exonuclease domain. The HRDC domain maps to 219–300 (NRRMLGVLRA…AAARALPDGA (82 aa)).

Belongs to the RNase D family. The cofactor is a divalent metal cation.

The protein resides in the cytoplasm. It catalyses the reaction Exonucleolytic cleavage that removes extra residues from the 3'-terminus of tRNA to produce 5'-mononucleotides.. Exonuclease involved in the 3' processing of various precursor tRNAs. Initiates hydrolysis at the 3'-terminus of an RNA molecule and releases 5'-mononucleotides. This chain is Ribonuclease D, found in Gluconacetobacter diazotrophicus (strain ATCC 49037 / DSM 5601 / CCUG 37298 / CIP 103539 / LMG 7603 / PAl5).